We begin with the raw amino-acid sequence, 251 residues long: Fibroblast growth factor 23 (251 aa).

Positions 1-24 are cleaved as a signal peptide; the sequence is MLGARLRLWVCALCSVCSMSVLRA. Cys-95 and Cys-113 are joined by a disulfide. Residues Thr-171 and Thr-178 are each glycosylated (O-linked (GalNAc) threonine). The segment at 172-221 is disordered; that stretch reads PIPRRHTRSAEDDSERDPLNVLKPRARMTPAPASCSQELPSAEDNSPMAS. Residue Ser-180 is modified to Phosphoserine; by FAM20C. Polar residues predominate over residues 205-219; that stretch reads SCSQELPSAEDNSPM.

This sequence belongs to the heparin-binding growth factors family. Interacts with FGFR1, FGFR2, FGFR3 and FGFR4. Affinity between fibroblast growth factors (FGFs) and their receptors is increased by KL and heparan sulfate glycosaminoglycans that function as coreceptors. In terms of processing, following secretion this protein is inactivated by cleavage into a N-terminal fragment and a C-terminal fragment. The processing is effected by proprotein convertases. Post-translationally, O-glycosylated at Thr-171 and Thr-178 by GALNT3 and glycosylation of Thr-178 requires previous glycosylation at Thr171. Glycosylation is necessary for secretion; it blocks processing by proprotein convertases when the O-glycan is alpha 2,6-sialylated. Competition between proprotein convertase cleavage and block of cleavage by O-glycosylation determines the level of secreted active FGF23. Phosphorylation at Ser-180 mediated by FAM20C slows down glycosylation at Thr-178 notably. Expressed in osteogenic cells particularly during phases of active bone remodeling. In adult trabecular bone, expressed in osteocytes and flattened bone-lining cells (inactive osteoblasts).

It localises to the secreted. In terms of biological role, regulator of phosphate homeostasis. Inhibits renal tubular phosphate transport by reducing SLC34A1 levels. Up-regulates EGR1 expression in the presence of KL. Acts directly on the parathyroid to decrease PTH secretion. Regulator of vitamin-D metabolism. Negatively regulates osteoblast differentiation and matrix mineralization. The protein is Fibroblast growth factor 23 (FGF23) of Homo sapiens (Human).